A 489-amino-acid polypeptide reads, in one-letter code: ATP-dependent zinc metalloprotease FtsH 3 (489 aa).

Residues 1–14 (MNPRPVRPGGSLQQ) are Cytoplasmic-facing. The chain crosses the membrane as a helical span at residues 15 to 31 (SLLALGSLSVAVGLAVW). At 32–489 (QQRTLGRGRS…GPRPARPAMN (458 aa)) the chain is on the extracellular side. 95-102 (GPPGTGKT) provides a ligand contact to ATP. His-315 provides a ligand contact to Zn(2+). Residue Glu-316 is part of the active site. The Zn(2+) site is built by His-319 and Asp-391.

This sequence in the central section; belongs to the AAA ATPase family. It in the C-terminal section; belongs to the peptidase M41 family. In terms of assembly, homohexamer. Requires Zn(2+) as cofactor.

The protein resides in the cell membrane. Functionally, acts as a processive, ATP-dependent zinc metallopeptidase for both cytoplasmic and membrane proteins. Plays a role in the quality control of integral membrane proteins. This is ATP-dependent zinc metalloprotease FtsH 3 from Sphaerobacter thermophilus (strain ATCC 49802 / DSM 20745 / KCCM 41009 / NCIMB 13125 / S 6022).